We begin with the raw amino-acid sequence, 1056 residues long: Carbamoyl phosphate synthase large chain (1056 aa).

Residues 1 to 397 (MPRRTDIKKV…GFKKALRSID (397 aa)) form a carboxyphosphate synthetic domain region. ATP contacts are provided by Arg-127, Arg-167, Gly-173, Gly-174, Glu-206, Val-208, Glu-213, Gly-239, Val-240, His-241, Gln-282, and Glu-294. Residues 131–323 (KALMQKIGEP…IARVAAKIAI (193 aa)) enclose the ATP-grasp 1 domain. 3 residues coordinate Mg(2+): Gln-282, Glu-294, and Asn-296. Mn(2+)-binding residues include Gln-282, Glu-294, and Asn-296. The tract at residues 398-530 (TDINTHTNHN…YSTHGVTTDI (133 aa)) is oligomerization domain. Residues 531–919 (IQNDKKKVLI…YKACISADNE (389 aa)) form a carbamoyl phosphate synthetic domain region. An ATP-grasp 2 domain is found at 661 to 852 (SELLDALKIP…LAKVAAKVMI (192 aa)). Positions 697, 736, 738, 743, 768, 769, 770, 771, 811, and 823 each coordinate ATP. The Mg(2+) site is built by Gln-811, Glu-823, and Asn-825. Positions 811, 823, and 825 each coordinate Mn(2+). Residues 918-1056 (NELPIEGNVF…PISHYLSEVE (139 aa)) enclose the MGS-like domain. Residues 920 to 1056 (LPIEGNVFIS…PISHYLSEVE (137 aa)) are allosteric domain.

Belongs to the CarB family. As to quaternary structure, composed of two chains; the small (or glutamine) chain promotes the hydrolysis of glutamine to ammonia, which is used by the large (or ammonia) chain to synthesize carbamoyl phosphate. Tetramer of heterodimers (alpha,beta)4. It depends on Mg(2+) as a cofactor. Mn(2+) is required as a cofactor.

It catalyses the reaction hydrogencarbonate + L-glutamine + 2 ATP + H2O = carbamoyl phosphate + L-glutamate + 2 ADP + phosphate + 2 H(+). It carries out the reaction hydrogencarbonate + NH4(+) + 2 ATP = carbamoyl phosphate + 2 ADP + phosphate + 2 H(+). Its pathway is amino-acid biosynthesis; L-arginine biosynthesis; carbamoyl phosphate from bicarbonate: step 1/1. The protein operates within pyrimidine metabolism; UMP biosynthesis via de novo pathway; (S)-dihydroorotate from bicarbonate: step 1/3. Large subunit of the glutamine-dependent carbamoyl phosphate synthetase (CPSase). CPSase catalyzes the formation of carbamoyl phosphate from the ammonia moiety of glutamine, carbonate, and phosphate donated by ATP, constituting the first step of 2 biosynthetic pathways, one leading to arginine and/or urea and the other to pyrimidine nucleotides. The large subunit (synthetase) binds the substrates ammonia (free or transferred from glutamine from the small subunit), hydrogencarbonate and ATP and carries out an ATP-coupled ligase reaction, activating hydrogencarbonate by forming carboxy phosphate which reacts with ammonia to form carbamoyl phosphate. This Methanosphaerula palustris (strain ATCC BAA-1556 / DSM 19958 / E1-9c) protein is Carbamoyl phosphate synthase large chain.